Here is a 360-residue protein sequence, read N- to C-terminus: Aminomethyltransferase (360 aa).

It belongs to the GcvT family. The glycine cleavage system is composed of four proteins: P, T, L and H.

The enzyme catalyses N(6)-[(R)-S(8)-aminomethyldihydrolipoyl]-L-lysyl-[protein] + (6S)-5,6,7,8-tetrahydrofolate = N(6)-[(R)-dihydrolipoyl]-L-lysyl-[protein] + (6R)-5,10-methylene-5,6,7,8-tetrahydrofolate + NH4(+). Its function is as follows. The glycine cleavage system catalyzes the degradation of glycine. The sequence is that of Aminomethyltransferase from Legionella pneumophila (strain Paris).